Consider the following 287-residue polypeptide: Lipoyl synthase (287 aa).

Positions 34, 39, 45, 60, 64, 67, and 273 each coordinate [4Fe-4S] cluster. The Radical SAM core domain occupies 46 to 262 (WNKRHATVMI…KYIAYSKGFL (217 aa)).

The protein belongs to the radical SAM superfamily. Lipoyl synthase family. [4Fe-4S] cluster is required as a cofactor.

It localises to the cytoplasm. The enzyme catalyses [[Fe-S] cluster scaffold protein carrying a second [4Fe-4S](2+) cluster] + N(6)-octanoyl-L-lysyl-[protein] + 2 oxidized [2Fe-2S]-[ferredoxin] + 2 S-adenosyl-L-methionine + 4 H(+) = [[Fe-S] cluster scaffold protein] + N(6)-[(R)-dihydrolipoyl]-L-lysyl-[protein] + 4 Fe(3+) + 2 hydrogen sulfide + 2 5'-deoxyadenosine + 2 L-methionine + 2 reduced [2Fe-2S]-[ferredoxin]. The protein operates within protein modification; protein lipoylation via endogenous pathway; protein N(6)-(lipoyl)lysine from octanoyl-[acyl-carrier-protein]: step 2/2. Functionally, catalyzes the radical-mediated insertion of two sulfur atoms into the C-6 and C-8 positions of the octanoyl moiety bound to the lipoyl domains of lipoate-dependent enzymes, thereby converting the octanoylated domains into lipoylated derivatives. This Wolbachia sp. subsp. Brugia malayi (strain TRS) protein is Lipoyl synthase.